Here is a 2309-residue protein sequence, read N- to C-terminus: Collagen alpha-4(VI) chain (2309 aa).

The N-terminal stretch at 1–22 (MGTWKTFWLIISLAAGLGFVKS) is a signal peptide. The interval 21–1410 (KSQRIVCREA…TCCNMYAKCY (1390 aa)) is nonhelical region. VWFA domains lie at 34–206 (DIVF…AQKL), 235–413 (DIVF…LQAL), 430–653 (DVVF…FQRV), 634–811 (DLVF…GNKL), 849–1018 (DIYF…IRDI), and 1030–1199 (DIIF…EKEI). N188 carries N-linked (GlcNAc...) asparagine glycosylation. N754 is a glycosylation site (N-linked (GlcNAc...) asparagine). N-linked (GlcNAc...) asparagine glycosylation occurs at N1114. The interval 1411-1744 (GDDGIRGEPG…GKMGTKGSKG (334 aa)) is triple-helical region. Basic and acidic residues predominate over residues 1414 to 1430 (GIRGEPGSRGEQGERGL). The disordered stretch occupies residues 1414 to 1746 (GIRGEPGSRG…MGTKGSKGLA (333 aa)). Gly residues predominate over residues 1480 to 1489 (GEEGVGGLDG). The Cell attachment site signature appears at 1527–1529 (RGD). Composition is skewed to low complexity over residues 1605-1621 (PRGR…KGDP) and 1650-1669 (PAGE…PGLF). A nonhelical region region spans residues 1745 to 2309 (LADRTPCEIV…EGECLNYVLK (565 aa)). VWFA domains are found at residues 1776–1957 (EVVF…ASCT) and 1982–2187 (DLVF…LNLL). The Cell attachment site signature appears at 2208 to 2210 (RGD). A disordered region spans residues 2262–2300 (ALGSHGKDRADTEDIDQETPAKGRHLGPTHGPCPMGPEE).

This sequence belongs to the type VI collagen family. In terms of assembly, trimers composed of three different chains: alpha-1(VI), alpha-2(VI), and alpha-3(VI) or alpha-4(VI) or alpha-5(VI) or alpha-6(VI). In terms of processing, prolines at the third position of the tripeptide repeating unit (G-X-Y) are hydroxylated in some or all of the chains. In newborn, it is expressed in lung, kidney, brain, intestine, skin, sternum and, at weak level, calvaria. In adult, it is almost absent with some weak expression in ovary and very weak expression in spleen, lung, uterus and brain.

Its subcellular location is the secreted. The protein resides in the extracellular space. It localises to the extracellular matrix. Collagen VI acts as a cell-binding protein. The sequence is that of Collagen alpha-4(VI) chain (Col6a4) from Mus musculus (Mouse).